Here is a 159-residue protein sequence, read N- to C-terminus: Ribosomal RNA large subunit methyltransferase H (159 aa).

S-adenosyl-L-methionine contacts are provided by residues leucine 76, glycine 108, and 127 to 132 (FGLLTL).

Belongs to the RNA methyltransferase RlmH family. As to quaternary structure, homodimer.

The protein localises to the cytoplasm. The enzyme catalyses pseudouridine(1915) in 23S rRNA + S-adenosyl-L-methionine = N(3)-methylpseudouridine(1915) in 23S rRNA + S-adenosyl-L-homocysteine + H(+). In terms of biological role, specifically methylates the pseudouridine at position 1915 (m3Psi1915) in 23S rRNA. This is Ribosomal RNA large subunit methyltransferase H from Streptococcus pyogenes serotype M12 (strain MGAS2096).